Here is a 447-residue protein sequence, read N- to C-terminus: Aladin (447 aa).

Residues 49-69 are disordered; it reads STPSSLQENEGQENGDKASGE. 4 WD repeats span residues 97–138, 142–181, 210–250, and 252–291; these read LSEI…EPCI, DSQR…NMAL, QNDE…GTPI, and RGLG…SEPW.

In terms of assembly, part of the nuclear pore complex (NPC). The NPC has an eight-fold symmetrical structure comprising a central transport channel and two rings, the cytoplasmic and nuclear rings, to which eight filaments are attached. The cytoplasmic filaments have loose ends, while the nuclear filaments are joined in a distal ring, forming a nuclear basket. NPCs are highly dynamic in configuration and composition, and can be devided in 3 subcomplexes, the NUP62 subcomplex, the NUP107-160 subcomplex and the NUP93 subcomplex, containing approximately 30 different nucleoporin proteins.

The protein localises to the nucleus envelope. Its subcellular location is the nucleus. It localises to the nuclear pore complex. The protein is Aladin of Arabidopsis thaliana (Mouse-ear cress).